Here is a 360-residue protein sequence, read N- to C-terminus: UDP-N-acetylglucosamine--N-acetylmuramyl-(pentapeptide) pyrophosphoryl-undecaprenol N-acetylglucosamine transferase (360 aa).

Residues serine 198 and glutamine 289 each contribute to the UDP-N-acetyl-alpha-D-glucosamine site.

It belongs to the glycosyltransferase 28 family. MurG subfamily.

Its subcellular location is the cell membrane. It catalyses the reaction Mur2Ac(oyl-L-Ala-gamma-D-Glu-L-Lys-D-Ala-D-Ala)-di-trans,octa-cis-undecaprenyl diphosphate + UDP-N-acetyl-alpha-D-glucosamine = beta-D-GlcNAc-(1-&gt;4)-Mur2Ac(oyl-L-Ala-gamma-D-Glu-L-Lys-D-Ala-D-Ala)-di-trans,octa-cis-undecaprenyl diphosphate + UDP + H(+). Its pathway is cell wall biogenesis; peptidoglycan biosynthesis. Functionally, cell wall formation. Catalyzes the transfer of a GlcNAc subunit on undecaprenyl-pyrophosphoryl-MurNAc-pentapeptide (lipid intermediate I) to form undecaprenyl-pyrophosphoryl-MurNAc-(pentapeptide)GlcNAc (lipid intermediate II). In Streptococcus pyogenes serotype M6 (strain ATCC BAA-946 / MGAS10394), this protein is UDP-N-acetylglucosamine--N-acetylmuramyl-(pentapeptide) pyrophosphoryl-undecaprenol N-acetylglucosamine transferase.